The following is a 410-amino-acid chain: Cysteine desulfurase IscS (410 aa).

Residues 80–81 (AT), Asn-160, Gln-188, and 208–210 (SGH) each bind pyridoxal 5'-phosphate. Lys-211 carries the post-translational modification N6-(pyridoxal phosphate)lysine. Thr-248 lines the pyridoxal 5'-phosphate pocket. Cys-334 acts as the Cysteine persulfide intermediate in catalysis. Cys-334 contributes to the [2Fe-2S] cluster binding site.

This sequence belongs to the class-V pyridoxal-phosphate-dependent aminotransferase family. NifS/IscS subfamily. In terms of assembly, homodimer. Forms a heterotetramer with IscU, interacts with other sulfur acceptors. Pyridoxal 5'-phosphate serves as cofactor.

It localises to the cytoplasm. The catalysed reaction is (sulfur carrier)-H + L-cysteine = (sulfur carrier)-SH + L-alanine. The protein operates within cofactor biosynthesis; iron-sulfur cluster biosynthesis. Master enzyme that delivers sulfur to a number of partners involved in Fe-S cluster assembly, tRNA modification or cofactor biosynthesis. Catalyzes the removal of elemental sulfur atoms from cysteine to produce alanine. Functions as a sulfur delivery protein for Fe-S cluster synthesis onto IscU, an Fe-S scaffold assembly protein, as well as other S acceptor proteins. The chain is Cysteine desulfurase IscS from Rickettsia typhi (strain ATCC VR-144 / Wilmington).